The sequence spans 299 residues: 4-hydroxybenzoate octaprenyltransferase (299 aa).

7 helical membrane-spanning segments follow: residues I34 to L54, L57 to I77, L108 to L128, W163 to L183, F221 to D241, D245 to F265, and F277 to A297.

The protein belongs to the UbiA prenyltransferase family. Mg(2+) serves as cofactor.

The protein resides in the cell inner membrane. The catalysed reaction is all-trans-octaprenyl diphosphate + 4-hydroxybenzoate = 4-hydroxy-3-(all-trans-octaprenyl)benzoate + diphosphate. It participates in cofactor biosynthesis; ubiquinone biosynthesis. Its function is as follows. Catalyzes the prenylation of para-hydroxybenzoate (PHB) with an all-trans polyprenyl group. Mediates the second step in the final reaction sequence of ubiquinone-8 (UQ-8) biosynthesis, which is the condensation of the polyisoprenoid side chain with PHB, generating the first membrane-bound Q intermediate 3-octaprenyl-4-hydroxybenzoate. The sequence is that of 4-hydroxybenzoate octaprenyltransferase from Xanthomonas oryzae pv. oryzae (strain MAFF 311018).